Here is a 102-residue protein sequence, read N- to C-terminus: UPF0045 protein Mb1933 (102 aa).

This sequence belongs to the UPF0045 family.

The protein is UPF0045 protein Mb1933 of Mycobacterium bovis (strain ATCC BAA-935 / AF2122/97).